The sequence spans 164 residues: S-ribosylhomocysteine lyase (164 aa).

Fe cation is bound by residues histidine 54, histidine 58, and cysteine 128.

It belongs to the LuxS family. In terms of assembly, homodimer. Requires Fe cation as cofactor.

The catalysed reaction is S-(5-deoxy-D-ribos-5-yl)-L-homocysteine = (S)-4,5-dihydroxypentane-2,3-dione + L-homocysteine. In terms of biological role, involved in the synthesis of autoinducer 2 (AI-2) which is secreted by bacteria and is used to communicate both the cell density and the metabolic potential of the environment. The regulation of gene expression in response to changes in cell density is called quorum sensing. Catalyzes the transformation of S-ribosylhomocysteine (RHC) to homocysteine (HC) and 4,5-dihydroxy-2,3-pentadione (DPD). This is S-ribosylhomocysteine lyase from Campylobacter jejuni subsp. jejuni serotype O:6 (strain 81116 / NCTC 11828).